A 650-amino-acid polypeptide reads, in one-letter code: Epithelial sodium channel subunit beta (650 aa).

At 1–95 (MLLHINPAYL…IICEGPKKKA (95 aa)) the chain is on the cytoplasmic side. The chain crosses the membrane as a helical span at residues 96–116 (MWFLLTLLFTALVCWQWGIFI). Residues 117-542 (RTYLSWEVSV…GGQFGFWMGG (426 aa)) are Extracellular-facing. Intrachain disulfides connect Cys143/Cys317, Cys229/Cys234, Cys241/Cys248, Cys294/Cys301, and Cys406/Cys458. N-linked (GlcNAc...) asparagine glycosylation is present at Asn244. Asn305 is a glycosylation site (N-linked (GlcNAc...) asparagine). Residues 543-563 (SVLCLIEFGEIIIDFVWITII) traverse the membrane as a helical segment. Over 564–650 (KLVALAKSLR…IESDSEGDAI (87 aa)) the chain is Cytoplasmic. The disordered stretch occupies residues 600 to 650 (FQPDTAPRSPNTGPYPNEQALPIPGTPPPNYDSLRLQPLDVIESDSEGDAI). The PY motif; recruits WW domain-containing proteins and is thereby required for ubiquitination and inhibition of the channel by NEDD4 and NEDD4L signature appears at 626–630 (PPPNY). Acidic residues predominate over residues 641–650 (IESDSEGDAI). 2 positions are modified to phosphoserine: Ser643 and Ser645.

The protein belongs to the amiloride-sensitive sodium channel (TC 1.A.6) family. SCNN1B subfamily. In terms of assembly, component of the heterotrimeric epithelial sodium channel (ENaC) composed of an alpha/SCNN1A, a beta/SCNN1B and a gamma/SCNN1G subunit. An additional delta/SCNN1D subunit can replace the alpha/SCNN1A subunit to form an alternative channel with specific properties. Interacts with WWP1 (via WW domains). Interacts with WWP2 (via WW domains); inhibits the channel. Interacts with the full-length immature form of PCSK9 (pro-PCSK9). Interacts (N-glycosylated) with BPIFA1; the interaction is direct and inhibits the proteolytic processing of SCNN1A and SCNN1G and the activation of ENaC. Post-translationally, ubiquitinated. Can be ubiquitinated at multiple sites and undergo monoubiquitination and polyubiquitination. Ubiquitination by NEDD4 or NEDD4L inhibits the ENaC channel through endocytosis, intracellular retention and degradation of its individual subunits. However, some studies could not confirm the ubiquitination of this subunit of the ENaC. In terms of processing, phosphorylated on serine and threonine residues. Aldosterone and insulin increase the basal level of phosphorylation. N-glycosylated. N-glycosylation is required for interaction with BPIFA1.

It is found in the apical cell membrane. Its subcellular location is the cytoplasmic vesicle membrane. It carries out the reaction Na(+)(in) = Na(+)(out). With respect to regulation, originally identified and characterized by its inhibition by the diuretic drug amiloride. Functionally, this is one of the three pore-forming subunits of the heterotrimeric epithelial sodium channel (ENaC), a critical regulator of sodium balance and fluid homeostasis. ENaC operates in epithelial tissues, where it mediates the electrodiffusion of sodium ions from extracellular fluid through the apical membrane of cells, with water following osmotically. It plays a key role in maintaining sodium homeostasis through electrogenic sodium reabsorption in the kidneys. Additionally, ENaC is essential for airway surface liquid homeostasis, which is crucial for proper mucus clearance. The polypeptide is Epithelial sodium channel subunit beta (Pan troglodytes (Chimpanzee)).